The chain runs to 129 residues: Small ribosomal subunit protein uS11 (129 aa).

It belongs to the universal ribosomal protein uS11 family. Part of the 30S ribosomal subunit. Interacts with proteins S7 and S18. Binds to IF-3.

Located on the platform of the 30S subunit, it bridges several disparate RNA helices of the 16S rRNA. Forms part of the Shine-Dalgarno cleft in the 70S ribosome. This is Small ribosomal subunit protein uS11 from Sphingopyxis alaskensis (strain DSM 13593 / LMG 18877 / RB2256) (Sphingomonas alaskensis).